Consider the following 149-residue polypeptide: Small ribosomal subunit protein bS16 (149 aa).

The disordered stretch occupies residues 115–149; sequence KLKAAKSEADAKAKAEAEAAATEEAPAEEPAAEAE. Positions 119–131 are enriched in basic and acidic residues; that stretch reads AKSEADAKAKAEA. Residues 139–149 are compositionally biased toward acidic residues; it reads APAEEPAAEAE.

It belongs to the bacterial ribosomal protein bS16 family.

The polypeptide is Small ribosomal subunit protein bS16 (Bifidobacterium adolescentis (strain ATCC 15703 / DSM 20083 / NCTC 11814 / E194a)).